The primary structure comprises 369 residues: Phospho-N-acetylmuramoyl-pentapeptide-transferase (369 aa).

A run of 10 helical transmembrane segments spans residues 3–23 (ALLG…PLFI), 53–73 (GGIV…LLTW), 81–101 (VTPS…VGFL), 118–138 (WQKI…AITL), 162–182 (FMAL…CLIV), 198–218 (LAAG…FWQF), 240–260 (PLDL…FLWW), 267–287 (IFMG…LAIL), 290–310 (TELL…SVVL), and 347–367 (FWII…LEWI).

This sequence belongs to the glycosyltransferase 4 family. MraY subfamily. It depends on Mg(2+) as a cofactor.

The protein resides in the cell membrane. The catalysed reaction is UDP-N-acetyl-alpha-D-muramoyl-L-alanyl-gamma-D-glutamyl-meso-2,6-diaminopimeloyl-D-alanyl-D-alanine + di-trans,octa-cis-undecaprenyl phosphate = di-trans,octa-cis-undecaprenyl diphospho-N-acetyl-alpha-D-muramoyl-L-alanyl-D-glutamyl-meso-2,6-diaminopimeloyl-D-alanyl-D-alanine + UMP. It functions in the pathway cell wall biogenesis; peptidoglycan biosynthesis. Functionally, catalyzes the initial step of the lipid cycle reactions in the biosynthesis of the cell wall peptidoglycan: transfers peptidoglycan precursor phospho-MurNAc-pentapeptide from UDP-MurNAc-pentapeptide onto the lipid carrier undecaprenyl phosphate, yielding undecaprenyl-pyrophosphoryl-MurNAc-pentapeptide, known as lipid I. This is Phospho-N-acetylmuramoyl-pentapeptide-transferase from Clavibacter sepedonicus (Clavibacter michiganensis subsp. sepedonicus).